A 466-amino-acid polypeptide reads, in one-letter code: Alpha-1,3-mannosyltransferase CMT1 (466 aa).

Residues 1-23 (MFRNTLRTFPRPATPSLPTSSHS) form a disordered region. At 1 to 33 (MFRNTLRTFPRPATPSLPTSSHSPIARASLSKS) the chain is on the cytoplasmic side. Residues 34–54 (PLFVLSLVLVCIFFLSFLSHP) traverse the membrane as a helical; Signal-anchor for type II membrane protein segment. The Lumenal portion of the chain corresponds to 55–466 (DPSARKLQWP…ETRWVQPWLE (412 aa)).

Requires Mg(2+) as cofactor. Mn(2+) serves as cofactor. Co(2+) is required as a cofactor.

The protein resides in the golgi apparatus membrane. It functions in the pathway protein modification; protein glycosylation. Responsible for addition of mannose residues in an alpha-1,3 linkage to a polymannosly precursor. May be involved in synthesis of capsule glucuronoxylomannan. The protein is Alpha-1,3-mannosyltransferase CMT1 of Cryptococcus neoformans var. neoformans serotype D (strain JEC21 / ATCC MYA-565) (Filobasidiella neoformans).